Reading from the N-terminus, the 1180-residue chain is DNA-directed RNA polymerase subunit beta (1180 aa).

Residues 1154–1164 (EMKELDDEDEQ) show a composition bias toward acidic residues. Positions 1154–1180 (EMKELDDEDEQASDKLNLNIDSTESNV) are disordered. A compositionally biased stretch (polar residues) spans 1167-1180 (DKLNLNIDSTESNV).

Belongs to the RNA polymerase beta chain family. In terms of assembly, the RNAP catalytic core consists of 2 alpha, 1 beta, 1 beta' and 1 omega subunit. When a sigma factor is associated with the core the holoenzyme is formed, which can initiate transcription.

The enzyme catalyses RNA(n) + a ribonucleoside 5'-triphosphate = RNA(n+1) + diphosphate. In terms of biological role, DNA-dependent RNA polymerase catalyzes the transcription of DNA into RNA using the four ribonucleoside triphosphates as substrates. The polypeptide is DNA-directed RNA polymerase subunit beta (Halalkalibacterium halodurans (strain ATCC BAA-125 / DSM 18197 / FERM 7344 / JCM 9153 / C-125) (Bacillus halodurans)).